A 96-amino-acid chain; its full sequence is UPF0102 protein ML1607 (96 aa).

This sequence belongs to the UPF0102 family.

This chain is UPF0102 protein ML1607, found in Mycobacterium leprae (strain TN).